The sequence spans 172 residues: Trypsin inhibitor 1A (172 aa).

2 cysteine pairs are disulfide-bonded: cysteine 40–cysteine 84 and cysteine 133–cysteine 139.

It belongs to the protease inhibitor I3 (leguminous Kunitz-type inhibitor) family.

In terms of biological role, WTI-1B inhibits trypsin stoichiometrically. This chain is Trypsin inhibitor 1A, found in Psophocarpus tetragonolobus (Winged bean).